We begin with the raw amino-acid sequence, 160 residues long: Peptide deformylase 1 (160 aa).

Positions 90 and 132 each coordinate Fe cation. The active site involves E133. H136 provides a ligand contact to Fe cation.

It belongs to the polypeptide deformylase family. Fe(2+) is required as a cofactor.

It carries out the reaction N-terminal N-formyl-L-methionyl-[peptide] + H2O = N-terminal L-methionyl-[peptide] + formate. Functionally, removes the formyl group from the N-terminal Met of newly synthesized proteins. Requires at least a dipeptide for an efficient rate of reaction. N-terminal L-methionine is a prerequisite for activity but the enzyme has broad specificity at other positions. The polypeptide is Peptide deformylase 1 (defA) (Bacillus subtilis (strain 168)).